Reading from the N-terminus, the 659-residue chain is Putative cysteine-rich receptor-like protein kinase 39 (659 aa).

Residues 1–27 (MGKYSVLMIFIASSLLIVLQNVEIVNA) form the signal peptide. Gnk2-homologous domains lie at 28–134 (VGCT…NHST) and 142–253 (PSVR…LYAF). Residues 28-289 (VGCTGSFFNG…KKKGRSIGYG (262 aa)) lie on the Extracellular side of the membrane. N-linked (GlcNAc...) asparagine glycans are attached at residues Asn38, Asn64, Asn122, Asn131, Asn157, Asn170, Asn259, and Asn274. A helical membrane pass occupies residues 290–310 (GIIAIVVVLTFINILVFIGYI). Residues 311–659 (KVYGRRKESY…DDVFTELSCR (349 aa)) lie on the Cytoplasmic side of the membrane. One can recognise a Protein kinase domain in the interval 353–619 (FSSENTLGQG…PTMSSVIIWL (267 aa)). Residues 359 to 367 (LGQGGFGTV) and Lys381 each bind ATP. Tyr426 carries the phosphotyrosine modification. Asp478 serves as the catalytic Proton acceptor. Ser482 is modified (phosphoserine). Phosphothreonine is present on Thr518. Position 526 is a phosphotyrosine (Tyr526).

Belongs to the protein kinase superfamily. Ser/Thr protein kinase family. CRK subfamily.

It localises to the membrane. The catalysed reaction is L-seryl-[protein] + ATP = O-phospho-L-seryl-[protein] + ADP + H(+). It catalyses the reaction L-threonyl-[protein] + ATP = O-phospho-L-threonyl-[protein] + ADP + H(+). In Arabidopsis thaliana (Mouse-ear cress), this protein is Putative cysteine-rich receptor-like protein kinase 39 (CRK39).